The chain runs to 722 residues: Nucleolar protein 10 (722 aa).

WD repeat units follow at residues E50–E90, T174–A213, E228–V266, Y270–S308, and E310–R349. Coiled-coil stretches lie at residues E423–A476 and S511–E534. Disordered regions lie at residues L521 to Q555, S572 to Y607, R616 to R635, and T664 to F722. The segment covering E523–E534 has biased composition (acidic residues). Residues S572 to T586 show a composition bias toward basic and acidic residues. Residues R587–G600 are compositionally biased toward polar residues. Residues D620–R681 adopt a coiled-coil conformation. Over residues T664–R682 the composition is skewed to basic and acidic residues. Basic residues-rich tracts occupy residues R683–S693 and G702–F722.

This sequence belongs to the WD repeat NOL10/ENP2 family.

It is found in the nucleus. It localises to the nucleolus. The protein is Nucleolar protein 10 (nol10) of Danio rerio (Zebrafish).